Here is a 356-residue protein sequence, read N- to C-terminus: S-adenosylmethionine:tRNA ribosyltransferase-isomerase (356 aa).

The protein belongs to the QueA family. As to quaternary structure, monomer.

The protein localises to the cytoplasm. The enzyme catalyses 7-aminomethyl-7-carbaguanosine(34) in tRNA + S-adenosyl-L-methionine = epoxyqueuosine(34) in tRNA + adenine + L-methionine + 2 H(+). It participates in tRNA modification; tRNA-queuosine biosynthesis. Its function is as follows. Transfers and isomerizes the ribose moiety from AdoMet to the 7-aminomethyl group of 7-deazaguanine (preQ1-tRNA) to give epoxyqueuosine (oQ-tRNA). The sequence is that of S-adenosylmethionine:tRNA ribosyltransferase-isomerase from Xanthomonas euvesicatoria pv. vesicatoria (strain 85-10) (Xanthomonas campestris pv. vesicatoria).